We begin with the raw amino-acid sequence, 504 residues long: UNC93-like protein C922.05c (504 aa).

A run of 11 helical transmembrane segments spans residues 64–84 (IIVSWVCFLCPGMFNALSGLG), 97–116 (ANVALYSTFAGLGFFAGSIC), 123–145 (LTLAIGGTGYSVYTASLLCYKHV), 149–169 (GFVIFGGCYLGLTAGMLWAAQ), 186–206 (IAIFWGIFNLGAVIGSIVPLA), 219–239 (GTYAGFIVLMAVGSALALFMV), 275–293 (YWVLLLFPMFFSSNWFTTY), 310–330 (LNNLLYWFAQIMGSAVAALFL), 343–363 (VGWGLVFVLICVIWGGGLAFQ), 391–411 (FLYIFYGMLDAIFQSYAYWII), and 452–472 (YFASCWALLCGSLIVASPVIW).

This sequence belongs to the unc-93 family.

It is found in the cytoplasm. It localises to the membrane. In Schizosaccharomyces pombe (strain 972 / ATCC 24843) (Fission yeast), this protein is UNC93-like protein C922.05c.